A 303-amino-acid polypeptide reads, in one-letter code: Acetylglutamate kinase (303 aa).

Substrate is bound by residues 75–76 (GG), R97, and N194.

This sequence belongs to the acetylglutamate kinase family. ArgB subfamily.

It is found in the cytoplasm. It carries out the reaction N-acetyl-L-glutamate + ATP = N-acetyl-L-glutamyl 5-phosphate + ADP. It functions in the pathway amino-acid biosynthesis; L-arginine biosynthesis; N(2)-acetyl-L-ornithine from L-glutamate: step 2/4. Catalyzes the ATP-dependent phosphorylation of N-acetyl-L-glutamate. This is Acetylglutamate kinase from Gloeobacter violaceus (strain ATCC 29082 / PCC 7421).